A 126-amino-acid chain; its full sequence is Nascent polypeptide-associated complex protein (126 aa).

In terms of domain architecture, NAC-A/B spans 10 to 77 (PRMMKQMQKM…AKKVAKAEEK (68 aa)).

It belongs to the NAC-alpha family. As to quaternary structure, homodimer. Interacts with the ribosome. Binds ribosomal RNA.

Functionally, contacts the emerging nascent chain on the ribosome. The sequence is that of Nascent polypeptide-associated complex protein from Methanococcus maripaludis (strain C6 / ATCC BAA-1332).